The following is a 1091-amino-acid chain: MYTPVDPKVDFVAQERRILAFWRERRVFEQSVAQRAQGKSYVFFDGPPFATGLPHFGHFVPSTIKDIIPRYQTMRGAYVPRRFGWDCHGLPIEHLIEQELNLNSKSDVESYGVSAFNAACRSSVLRYVKEWQRTLTRLGRWVDFDNDYKTMDVCYMESVWWVVAQLWQRKLLYEGYKILPYCPRCATALSNHELNLGGYQDVSDPAITVRFECTSVVPGSPAAREFCAAASWGSASLPAHTCFLAWTTTPWTLPCNAALALGPQILYVLIEANDEHYILARSRLEFYYPDSSAYRVVWEKRGEHLAGIRYRPLFSYPVFGQGPDPSVQGDSEEGLFCTRVADFVSTEDGTGVVHVAPAFGEDDYEVFKDAGISIQCPLDAECRFTAEVADYQGLFVKAADKAIIARVQKQGALFRREQISHAYPHCWRCASPLIYRAVHSWFVAVEKIKDKMLAANASICWQPSHIRDGRFGKWLVCARDWAISRDRYWGNPLPIWRCVHCGATDCIGSRTQLYERSGMLLEDLHKHVVDMVTIPCACGSVMRRVPEVLDCWFESGAMPYAQQHYPFEHATDFERYFPAHFISEGLDQTRGWFYTLTILAVALFERPAFENCIVTGLVLASDGKKMSKALRNYADPNEVMDRYGADALRLFLVRSAVVRADDLKYSDEGVKDILKTVIIPLWNSYSFYVTYANIDGIDPPVCAKVDGMGQAVTRLATHLNNPLDRWILSLTEKLVQDIACALDAYDVSKVADPIVSYVDQLNNWYIRRSRRRFWKSINDEDKRCAYNTLYCVLKRCVLAIAPVVPFITESIWQNIRAADDVQSVHLADYPVCTPMVRDDALEFKMETVQRVVSMARAIRAQCNLKVRQPLKAMQVITRNPMERSALLEMEEDVLDELNVKELVFHEKEDEIVEYRAKANFRVLGKELGSKTKRAALSIERLSSAEIQEILEGTTLYLDVDGDRLELTEEKILVQRIERESLKAINEGTLTVALDTTLTEDLLLEGAIRDLVRGVQNLRKERGFSLVDRICLRVFSSDQDIVCARKAYDLHRSYIVGETLAAHVQWARVRDGASAVYVKSDAVLWEVSIDKA.

The short motif at 48–58 (PFATGLPHFGH) is the 'HIGH' region element. The 'KMSKS' region motif lies at 625–629 (KMSKA). ATP is bound at residue K628.

This sequence belongs to the class-I aminoacyl-tRNA synthetase family. IleS type 2 subfamily. In terms of assembly, monomer. Zn(2+) is required as a cofactor.

It is found in the cytoplasm. It catalyses the reaction tRNA(Ile) + L-isoleucine + ATP = L-isoleucyl-tRNA(Ile) + AMP + diphosphate. Functionally, catalyzes the attachment of isoleucine to tRNA(Ile). As IleRS can inadvertently accommodate and process structurally similar amino acids such as valine, to avoid such errors it has two additional distinct tRNA(Ile)-dependent editing activities. One activity is designated as 'pretransfer' editing and involves the hydrolysis of activated Val-AMP. The other activity is designated 'posttransfer' editing and involves deacylation of mischarged Val-tRNA(Ile). The protein is Isoleucine--tRNA ligase of Treponema pallidum (strain Nichols).